The primary structure comprises 132 residues: Agouti-related protein (132 aa).

The first 20 residues, 1–20 (MLTAAVLSCALLLALPATRG), serve as a signal peptide directing secretion. Residues 21–82 (AQMGLAPMEG…VLDLQDREPR (62 aa)) constitute a propeptide that is removed on maturation. Disulfide bonds link C87/C102, C94/C108, C101/C119, C105/C129, and C110/C117. The Agouti domain maps to 87-129 (CVRLHESCLGQQVPCCDPCATCYCRFFNAFCYCRKLGTAMNPC). Positions 111-113 (RFF) are interaction with melanocortin receptors.

In terms of assembly, interacts with melanocortin receptors MC3R, MC4R and MC5R. As to expression, expressed primarily in the adrenal gland, subthalamic nucleus, and hypothalamus, with a lower level of expression occurring in testis, lung, and kidney.

Its subcellular location is the secreted. The protein resides in the golgi apparatus lumen. Its function is as follows. Plays a role in weight homeostasis. Involved in the control of feeding behavior through the central melanocortin system. Acts as alpha melanocyte-stimulating hormone antagonist by inhibiting cAMP production mediated by stimulation of melanocortin receptors within the hypothalamus and adrenal gland. Has very low activity with MC5R. Is an inverse agonist for MC3R and MC4R being able to suppress their constitutive activity. It promotes MC3R and MC4R endocytosis in an arrestin-dependent manner. The chain is Agouti-related protein (AGRP) from Homo sapiens (Human).